We begin with the raw amino-acid sequence, 225 residues long: NAD(P)H-quinone oxidoreductase subunit K, chloroplastic (225 aa).

Positions 43, 44, 108, and 139 each coordinate [4Fe-4S] cluster.

This sequence belongs to the complex I 20 kDa subunit family. In terms of assembly, NDH is composed of at least 16 different subunits, 5 of which are encoded in the nucleus. The cofactor is [4Fe-4S] cluster.

The protein resides in the plastid. The protein localises to the chloroplast thylakoid membrane. The catalysed reaction is a plastoquinone + NADH + (n+1) H(+)(in) = a plastoquinol + NAD(+) + n H(+)(out). It catalyses the reaction a plastoquinone + NADPH + (n+1) H(+)(in) = a plastoquinol + NADP(+) + n H(+)(out). Functionally, NDH shuttles electrons from NAD(P)H:plastoquinone, via FMN and iron-sulfur (Fe-S) centers, to quinones in the photosynthetic chain and possibly in a chloroplast respiratory chain. The immediate electron acceptor for the enzyme in this species is believed to be plastoquinone. Couples the redox reaction to proton translocation, and thus conserves the redox energy in a proton gradient. This chain is NAD(P)H-quinone oxidoreductase subunit K, chloroplastic, found in Platanus occidentalis (Sycamore).